We begin with the raw amino-acid sequence, 716 residues long: MSVDKAELCGSLLTWLQTFQVSPPCASPQDLSSGLAIAHVLNQIDPSWFNNEWLQGISEDSSPSWRLKVRKLEKILQSLVEYSKNVLGHPVSDQHLPDVSLIGEFSNPAELGKLLQLVLGCAISCEKKQEYIQRIMTLEESVQHVVMEAIQELMTKDTPDSLSPENYGNFDTQSRRYYFLSEEVEEGDHLQQHYLDLERQLLLLSEEKQNLAQENAALRERVGRSEVESAPGLTAKKLLLLQSQLEQLQEENFRLESSREDDRLRCLELEREVAELQQRNQALTSLSQEAQALKDEMDELRQSSERARQLEATLNSCRRRLGELQELRRQVRQLEERNAGHAERTRQLEEELRRAGSLRAQLEAQRRQVQELQGQWQEEAMKAEKWLFECRNLEEKCDLVTKEKERLLTERDSLREANEELRCAQLQPRGLAQADLSLDPTPSGLENLAAEILPAELRETLVRLQLENKRLCQQEAADRERQEELQRHLEEANRARHGLEAQQRLNQQQLSELRAQVEELQKALQEQGGKTEDPTLLKRKLEDHLQKLHEADLELQRKREYIEELEPPTDSSTARRIEELQDSLQKKDADLRAMEERYRRYVDKARTVIQTLEPKQRPPTVVSPEFHTLRSQLWERNLRIRQMEMDYEKSRRRQEQEEKLLISAWYSMGMALEHRAGEEHAPAHAQSFLAQQRLATNARRGPLGRQALSLRPTDKH.

The required for localization to the centrosome and induction of aggresome formation stretch occupies residues 1–161 (MSVDKAELCG…ELMTKDTPDS (161 aa)). Residues 1–546 (MSVDKAELCG…LKRKLEDHLQ (546 aa)) are sufficient for interaction with microtubules. Residues 6–122 (AELCGSLLTW…KLLQLVLGCA (117 aa)) form the Calponin-homology (CH) domain. At Ser163 the chain carries Phosphoserine. Coiled-coil stretches lie at residues 188 to 427 (DHLQ…AQLQ) and 455 to 605 (AELR…VDKA). The required for localization to the centrosome and induction of aggresome formation stretch occupies residues 533-716 (DPTLLKRKLE…ALSLRPTDKH (184 aa)). The interval 582-716 (DSLQKKDADL…ALSLRPTDKH (135 aa)) is sufficient for interaction with CNTRL.

It belongs to the hook family. Self-associates. Component of the FTS/Hook/FHIP complex (FHF complex), composed of AKTIP/FTS, FHIP1B, and one or more members of the Hook family of proteins HOOK1, HOOK2, and HOOK3. May interact directly with AKTIP/FTS, HOOK1 and HOOK3. Associates with several subunits of the homotypic vesicular sorting complex (the HOPS complex) including VPS16 and VPS41; these interactions may be indirect. Interacts with CNTRL. Interacts with microtubules. Interacts with ZC3H14. Interacts with LRGUK (via guanylate kinase-like domain). Interacts with CCDC181. Interacts with AP4M1; the interaction is direct, mediates the interaction between FTS-Hook-FHIP (FHF) complex and AP-4 and the perinuclear distribution of AP-4. Expressed in brain, cerebellum, kidney, liver and heart, with highest levels in heart and kidney (at protein level).

Its subcellular location is the cytoplasm. It localises to the cytoskeleton. It is found in the microtubule organizing center. The protein resides in the centrosome. The protein localises to the golgi apparatus. Its subcellular location is the trans-Golgi network. Component of the FTS/Hook/FHIP complex (FHF complex). The FHF complex may function to promote vesicle trafficking and/or fusion via the homotypic vesicular protein sorting complex (the HOPS complex). Contributes to the establishment and maintenance of centrosome function. May function in the positioning or formation of aggresomes, which are pericentriolar accumulations of misfolded proteins, proteasomes and chaperones. FHF complex promotes the distribution of AP-4 complex to the perinuclear area of the cell. The chain is Protein Hook homolog 2 (Hook2) from Mus musculus (Mouse).